The chain runs to 267 residues: 5'-nucleotidase SurE (267 aa).

The a divalent metal cation site is built by aspartate 9, aspartate 10, serine 40, and asparagine 97.

It belongs to the SurE nucleotidase family. Requires a divalent metal cation as cofactor.

It is found in the cytoplasm. It carries out the reaction a ribonucleoside 5'-phosphate + H2O = a ribonucleoside + phosphate. In terms of biological role, nucleotidase that shows phosphatase activity on nucleoside 5'-monophosphates. The protein is 5'-nucleotidase SurE of Helicobacter pylori (strain Shi470).